Reading from the N-terminus, the 143-residue chain is Nucleoside diphosphate kinase (143 aa).

Residues K11, F59, R87, T93, R104, and N114 each coordinate ATP. H117 functions as the Pros-phosphohistidine intermediate in the catalytic mechanism.

Belongs to the NDK family. As to quaternary structure, homotetramer. It depends on Mg(2+) as a cofactor.

Its subcellular location is the cytoplasm. The enzyme catalyses a 2'-deoxyribonucleoside 5'-diphosphate + ATP = a 2'-deoxyribonucleoside 5'-triphosphate + ADP. It carries out the reaction a ribonucleoside 5'-diphosphate + ATP = a ribonucleoside 5'-triphosphate + ADP. Functionally, major role in the synthesis of nucleoside triphosphates other than ATP. The ATP gamma phosphate is transferred to the NDP beta phosphate via a ping-pong mechanism, using a phosphorylated active-site intermediate. The protein is Nucleoside diphosphate kinase of Shewanella denitrificans (strain OS217 / ATCC BAA-1090 / DSM 15013).